We begin with the raw amino-acid sequence, 70 residues long: Large ribosomal subunit protein uL29 (70 aa).

This sequence belongs to the universal ribosomal protein uL29 family.

The protein is Large ribosomal subunit protein uL29 of Gloeobacter violaceus (strain ATCC 29082 / PCC 7421).